A 72-amino-acid chain; its full sequence is MGCAPGGPCCGPCGPCCGPCCGPCCGPCCGPCCGPCGPCCGPCGPRCGPCGPCGPCCGTMEKRNGLQRCCPF.

The protein belongs to the MST(3)CGP family. As to expression, testis.

This chain is Male-specific sperm protein Mst84Dd (Mst84Dd), found in Drosophila melanogaster (Fruit fly).